Reading from the N-terminus, the 575-residue chain is Isocitrate dehydrogenase kinase/phosphatase (575 aa).

ATP contacts are provided by residues 315–321 (APGIRGM) and Lys-336. Asp-371 is an active-site residue.

Belongs to the AceK family.

The protein resides in the cytoplasm. It catalyses the reaction L-seryl-[isocitrate dehydrogenase] + ATP = O-phospho-L-seryl-[isocitrate dehydrogenase] + ADP + H(+). Its function is as follows. Bifunctional enzyme which can phosphorylate or dephosphorylate isocitrate dehydrogenase (IDH) on a specific serine residue. This is a regulatory mechanism which enables bacteria to bypass the Krebs cycle via the glyoxylate shunt in response to the source of carbon. When bacteria are grown on glucose, IDH is fully active and unphosphorylated, but when grown on acetate or ethanol, the activity of IDH declines drastically concomitant with its phosphorylation. The protein is Isocitrate dehydrogenase kinase/phosphatase of Citrobacter koseri (strain ATCC BAA-895 / CDC 4225-83 / SGSC4696).